The following is a 350-amino-acid chain: Protein RecA (350 aa).

65–72 is an ATP binding site; that stretch reads GPESSGKT. The tract at residues 329 to 350 is disordered; that stretch reads ASPDVKANPVKETEDDMADADI. Over residues 341-350 the composition is skewed to acidic residues; sequence TEDDMADADI.

It belongs to the RecA family.

The protein resides in the cytoplasm. Can catalyze the hydrolysis of ATP in the presence of single-stranded DNA, the ATP-dependent uptake of single-stranded DNA by duplex DNA, and the ATP-dependent hybridization of homologous single-stranded DNAs. It interacts with LexA causing its activation and leading to its autocatalytic cleavage. This chain is Protein RecA, found in Pseudomonas fluorescens (strain ATCC BAA-477 / NRRL B-23932 / Pf-5).